The sequence spans 366 residues: UDP-N-acetylglucosamine--N-acetylmuramyl-(pentapeptide) pyrophosphoryl-undecaprenol N-acetylglucosamine transferase (366 aa).

Residues 10-12, Asn-124, Arg-165, Ser-192, Ile-247, and Gln-292 contribute to the UDP-N-acetyl-alpha-D-glucosamine site; that span reads TGG.

Belongs to the glycosyltransferase 28 family. MurG subfamily.

It localises to the cell inner membrane. The catalysed reaction is di-trans,octa-cis-undecaprenyl diphospho-N-acetyl-alpha-D-muramoyl-L-alanyl-D-glutamyl-meso-2,6-diaminopimeloyl-D-alanyl-D-alanine + UDP-N-acetyl-alpha-D-glucosamine = di-trans,octa-cis-undecaprenyl diphospho-[N-acetyl-alpha-D-glucosaminyl-(1-&gt;4)]-N-acetyl-alpha-D-muramoyl-L-alanyl-D-glutamyl-meso-2,6-diaminopimeloyl-D-alanyl-D-alanine + UDP + H(+). The protein operates within cell wall biogenesis; peptidoglycan biosynthesis. In terms of biological role, cell wall formation. Catalyzes the transfer of a GlcNAc subunit on undecaprenyl-pyrophosphoryl-MurNAc-pentapeptide (lipid intermediate I) to form undecaprenyl-pyrophosphoryl-MurNAc-(pentapeptide)GlcNAc (lipid intermediate II). This chain is UDP-N-acetylglucosamine--N-acetylmuramyl-(pentapeptide) pyrophosphoryl-undecaprenol N-acetylglucosamine transferase, found in Geotalea daltonii (strain DSM 22248 / JCM 15807 / FRC-32) (Geobacter daltonii).